The chain runs to 313 residues: Tagatose-6-phosphate kinase (313 aa).

Belongs to the carbohydrate kinase PfkB family. LacC subfamily.

The catalysed reaction is D-tagatofuranose 6-phosphate + ATP = D-tagatofuranose 1,6-bisphosphate + ADP + H(+). Its pathway is carbohydrate metabolism; D-tagatose 6-phosphate degradation; D-glyceraldehyde 3-phosphate and glycerone phosphate from D-tagatose 6-phosphate: step 1/2. In Enterococcus faecalis (strain ATCC 700802 / V583), this protein is Tagatose-6-phosphate kinase.